A 148-amino-acid polypeptide reads, in one-letter code: Globin, monomeric component M-IV (148 aa).

The 146-residue stretch at 2–147 (GLSAAQRQVV…ISGALISGLQ (146 aa)) folds into the Globin domain. Histidine 91 provides a ligand contact to heme b.

Monomer.

The polypeptide is Globin, monomeric component M-IV (Glycera dibranchiata (Bloodworm)).